Here is a 287-residue protein sequence, read N- to C-terminus: ATP synthase gamma chain (287 aa).

The protein belongs to the ATPase gamma chain family. F-type ATPases have 2 components, CF(1) - the catalytic core - and CF(0) - the membrane proton channel. CF(1) has five subunits: alpha(3), beta(3), gamma(1), delta(1), epsilon(1). CF(0) has three main subunits: a, b and c.

The protein resides in the cell inner membrane. Produces ATP from ADP in the presence of a proton gradient across the membrane. The gamma chain is believed to be important in regulating ATPase activity and the flow of protons through the CF(0) complex. This Geobacter metallireducens (strain ATCC 53774 / DSM 7210 / GS-15) protein is ATP synthase gamma chain.